A 413-amino-acid polypeptide reads, in one-letter code: Gamma-glutamyl phosphate reductase (413 aa).

Belongs to the gamma-glutamyl phosphate reductase family.

It localises to the cytoplasm. The catalysed reaction is L-glutamate 5-semialdehyde + phosphate + NADP(+) = L-glutamyl 5-phosphate + NADPH + H(+). It participates in amino-acid biosynthesis; L-proline biosynthesis; L-glutamate 5-semialdehyde from L-glutamate: step 2/2. In terms of biological role, catalyzes the NADPH-dependent reduction of L-glutamate 5-phosphate into L-glutamate 5-semialdehyde and phosphate. The product spontaneously undergoes cyclization to form 1-pyrroline-5-carboxylate. In Salinispora arenicola (strain CNS-205), this protein is Gamma-glutamyl phosphate reductase.